Here is a 326-residue protein sequence, read N- to C-terminus: tRNA dimethylallyltransferase (326 aa).

Residue 18 to 25 participates in ATP binding; that stretch reads GPTASGKS. Residue 20–25 coordinates substrate; that stretch reads TASGKS. Interaction with substrate tRNA stretches follow at residues 43–46 and 167–171; these read DSMQ and QRIAR.

It belongs to the IPP transferase family. Monomer. Mg(2+) is required as a cofactor.

It carries out the reaction adenosine(37) in tRNA + dimethylallyl diphosphate = N(6)-dimethylallyladenosine(37) in tRNA + diphosphate. Catalyzes the transfer of a dimethylallyl group onto the adenine at position 37 in tRNAs that read codons beginning with uridine, leading to the formation of N6-(dimethylallyl)adenosine (i(6)A). This is tRNA dimethylallyltransferase from Rhodospirillum rubrum (strain ATCC 11170 / ATH 1.1.1 / DSM 467 / LMG 4362 / NCIMB 8255 / S1).